A 78-amino-acid chain; its full sequence is UPF0349 protein Sca_0544 (78 aa).

The protein belongs to the UPF0349 family.

This Staphylococcus carnosus (strain TM300) protein is UPF0349 protein Sca_0544.